The following is a 329-amino-acid chain: Glycerol-3-phosphate dehydrogenase [NAD(P)+] (329 aa).

NADPH is bound by residues W15, H35, and K107. Residues K107, G135, and S137 each coordinate sn-glycerol 3-phosphate. NADPH is bound at residue A139. Positions 190, 243, 253, 254, and 255 each coordinate sn-glycerol 3-phosphate. The active-site Proton acceptor is K190. R254 provides a ligand contact to NADPH. Residues L276 and E278 each contribute to the NADPH site.

It belongs to the NAD-dependent glycerol-3-phosphate dehydrogenase family.

It localises to the cytoplasm. It catalyses the reaction sn-glycerol 3-phosphate + NAD(+) = dihydroxyacetone phosphate + NADH + H(+). The enzyme catalyses sn-glycerol 3-phosphate + NADP(+) = dihydroxyacetone phosphate + NADPH + H(+). It participates in membrane lipid metabolism; glycerophospholipid metabolism. Its function is as follows. Catalyzes the reduction of the glycolytic intermediate dihydroxyacetone phosphate (DHAP) to sn-glycerol 3-phosphate (G3P), the key precursor for phospholipid synthesis. In Rhodopseudomonas palustris (strain HaA2), this protein is Glycerol-3-phosphate dehydrogenase [NAD(P)+].